A 491-amino-acid polypeptide reads, in one-letter code: Phosphatidylglycerol--prolipoprotein diacylglyceryl transferase (491 aa).

The next 3 membrane-spanning stretches (helical) occupy residues 24–44 (IPLR…IWWG), 58–78 (VLDV…AYHV), and 98–118 (IWQG…GAWI). An a 1,2-diacyl-sn-glycero-3-phospho-(1'-sn-glycerol)-binding site is contributed by Arg-146. 2 consecutive transmembrane segments (helical) span residues 192–212 (IVHP…IALV) and 256–276 (INNF…VFAT). A compositionally biased stretch (low complexity) spans 309–323 (NGPAEPGATASTATD). Residues 309–491 (NGPAEPGATA…DRVDSGENDA (183 aa)) form a disordered region. Residues 347–360 (KGDRGTADAADTAK) show a composition bias toward basic and acidic residues. Low complexity-rich tracts occupy residues 361–387 (DASA…GSSD), 394–406 (AVKA…AAEK), and 415–438 (AGEA…SAKS). Basic and acidic residues predominate over residues 453 to 462 (NESESTRDNE). Residues 463 to 481 (STSAGTAASATGSAGAGAT) are compositionally biased toward low complexity. Positions 482–491 (DRVDSGENDA) are enriched in basic and acidic residues.

It belongs to the Lgt family.

The protein resides in the cell membrane. It carries out the reaction L-cysteinyl-[prolipoprotein] + a 1,2-diacyl-sn-glycero-3-phospho-(1'-sn-glycerol) = an S-1,2-diacyl-sn-glyceryl-L-cysteinyl-[prolipoprotein] + sn-glycerol 1-phosphate + H(+). The protein operates within protein modification; lipoprotein biosynthesis (diacylglyceryl transfer). In terms of biological role, catalyzes the transfer of the diacylglyceryl group from phosphatidylglycerol to the sulfhydryl group of the N-terminal cysteine of a prolipoprotein, the first step in the formation of mature lipoproteins. This chain is Phosphatidylglycerol--prolipoprotein diacylglyceryl transferase, found in Nocardia farcinica (strain IFM 10152).